The chain runs to 212 residues: Thymidylate kinase (212 aa).

11–18 contacts ATP; that stretch reads GPEGAGKT.

This sequence belongs to the thymidylate kinase family.

The enzyme catalyses dTMP + ATP = dTDP + ADP. Functionally, phosphorylation of dTMP to form dTDP in both de novo and salvage pathways of dTTP synthesis. This Streptococcus pneumoniae (strain ATCC 700669 / Spain 23F-1) protein is Thymidylate kinase.